The chain runs to 311 residues: Endosome-associated-trafficking regulator 1 (311 aa).

A coiled-coil region spans residues 167 to 278 (RGNAENGTKN…KSENERLRLG (112 aa)).

It belongs to the ENTR1 family.

The protein resides in the cytoplasm. The protein localises to the early endosome. It localises to the endosome. It is found in the recycling endosome. Its subcellular location is the midbody. The protein resides in the cytoskeleton. The protein localises to the microtubule organizing center. It localises to the centrosome. It is found in the cilium basal body. In terms of biological role, endosome-associated protein that plays a role in membrane receptor sorting, cytokinesis and ciliogenesis. The chain is Endosome-associated-trafficking regulator 1 from Danio rerio (Zebrafish).